Consider the following 683-residue polypeptide: DNA-directed RNA polymerase subunit beta' (683 aa).

The Zn(2+) site is built by Cys69, Cys71, Cys87, and Cys90. Mg(2+)-binding residues include Asp489, Asp491, and Asp493.

Belongs to the RNA polymerase beta' chain family. RpoC1 subfamily. In plastids the minimal PEP RNA polymerase catalytic core is composed of four subunits: alpha, beta, beta', and beta''. When a (nuclear-encoded) sigma factor is associated with the core the holoenzyme is formed, which can initiate transcription. The cofactor is Mg(2+). Zn(2+) serves as cofactor.

It localises to the plastid. The protein localises to the chloroplast. The catalysed reaction is RNA(n) + a ribonucleoside 5'-triphosphate = RNA(n+1) + diphosphate. Functionally, DNA-dependent RNA polymerase catalyzes the transcription of DNA into RNA using the four ribonucleoside triphosphates as substrates. The chain is DNA-directed RNA polymerase subunit beta' from Triticum aestivum (Wheat).